The chain runs to 168 residues: Putative adenylate kinase (168 aa).

Gly10, Gly12, Lys13, Thr14, and Thr15 together coordinate ATP. The tract at residues His28–Ala51 is NMP. The interval Asp97–Glu107 is LID. Arg98 provides a ligand contact to ATP.

The protein belongs to the adenylate kinase family. AK6 subfamily. As to quaternary structure, interacts with uS11. Not a structural component of 40S pre-ribosomes, but transiently interacts with them by binding to uS11.

The enzyme catalyses AMP + ATP = 2 ADP. It carries out the reaction ATP + H2O = ADP + phosphate + H(+). Broad-specificity nucleoside monophosphate (NMP) kinase that catalyzes the reversible transfer of the terminal phosphate group between nucleoside triphosphates and monophosphates. Also has ATPase activity. Involved in the late maturation steps of the 30S ribosomal particles, specifically 16S rRNA maturation. While NMP activity is not required for ribosome maturation, ATPase activity is. Associates transiently with small ribosomal subunit protein uS11. ATP hydrolysis breaks the interaction with uS11. May temporarily remove uS11 from the ribosome to enable a conformational change of the ribosomal RNA that is needed for the final maturation step of the small ribosomal subunit. This Natronomonas pharaonis (strain ATCC 35678 / DSM 2160 / CIP 103997 / JCM 8858 / NBRC 14720 / NCIMB 2260 / Gabara) (Halobacterium pharaonis) protein is Putative adenylate kinase.